A 208-amino-acid polypeptide reads, in one-letter code: Protein GrpE (208 aa).

A compositionally biased stretch (basic and acidic residues) spans 1 to 25 (MVDNKDFNEELKENIQEELDNETKA). The interval 1-38 (MVDNKDFNEELKENIQEELDNETKAENPNIDEEVEEVS) is disordered. A compositionally biased stretch (acidic residues) spans 29–38 (NIDEEVEEVS).

It belongs to the GrpE family. As to quaternary structure, homodimer.

The protein localises to the cytoplasm. Functionally, participates actively in the response to hyperosmotic and heat shock by preventing the aggregation of stress-denatured proteins, in association with DnaK and GrpE. It is the nucleotide exchange factor for DnaK and may function as a thermosensor. Unfolded proteins bind initially to DnaJ; upon interaction with the DnaJ-bound protein, DnaK hydrolyzes its bound ATP, resulting in the formation of a stable complex. GrpE releases ADP from DnaK; ATP binding to DnaK triggers the release of the substrate protein, thus completing the reaction cycle. Several rounds of ATP-dependent interactions between DnaJ, DnaK and GrpE are required for fully efficient folding. This Clostridium perfringens (strain ATCC 13124 / DSM 756 / JCM 1290 / NCIMB 6125 / NCTC 8237 / Type A) protein is Protein GrpE.